Reading from the N-terminus, the 413-residue chain is 1-deoxy-D-xylulose 5-phosphate reductoisomerase (413 aa).

Positions 13, 14, 15, 16, 40, 41, and 127 each coordinate NADPH. K128 serves as a coordination point for 1-deoxy-D-xylulose 5-phosphate. E129 serves as a coordination point for NADPH. A Mn(2+)-binding site is contributed by D153. S154, E155, S184, and H207 together coordinate 1-deoxy-D-xylulose 5-phosphate. E155 contributes to the Mn(2+) binding site. Position 213 (G213) interacts with NADPH. 1-deoxy-D-xylulose 5-phosphate-binding residues include S220, N225, K226, and E229. Position 229 (E229) interacts with Mn(2+).

This sequence belongs to the DXR family. The cofactor is Mg(2+). Mn(2+) is required as a cofactor.

The enzyme catalyses 2-C-methyl-D-erythritol 4-phosphate + NADP(+) = 1-deoxy-D-xylulose 5-phosphate + NADPH + H(+). It functions in the pathway isoprenoid biosynthesis; isopentenyl diphosphate biosynthesis via DXP pathway; isopentenyl diphosphate from 1-deoxy-D-xylulose 5-phosphate: step 1/6. Functionally, catalyzes the NADPH-dependent rearrangement and reduction of 1-deoxy-D-xylulose-5-phosphate (DXP) to 2-C-methyl-D-erythritol 4-phosphate (MEP). The sequence is that of 1-deoxy-D-xylulose 5-phosphate reductoisomerase from Nitrosomonas europaea (strain ATCC 19718 / CIP 103999 / KCTC 2705 / NBRC 14298).